A 200-amino-acid chain; its full sequence is AP-5 complex subunit sigma-1 (200 aa).

As to quaternary structure, probably part of the adaptor protein complex 5 (AP-5) a tetramer composed of AP5B1, AP5M1, AP5S1 and AP5Z1. Interacts with ZFYVE26 and SPG11.

The protein resides in the cytoplasm. It is found in the cytosol. The protein localises to the late endosome membrane. Its subcellular location is the lysosome membrane. Its function is as follows. As part of AP-5, a probable fifth adaptor protein complex it may be involved in endosomal transport. According to PubMed:20613862, it is required for efficient homologous recombination DNA double-strand break repair. The protein is AP-5 complex subunit sigma-1 (AP5S1) of Homo sapiens (Human).